Reading from the N-terminus, the 223-residue chain is N-terminal Xaa-Pro-Lys N-methyltransferase 1 (223 aa).

Residue methionine 1 is modified to N-acetylmethionine. Threonine 2 is modified (N-acetylthreonine; in N-terminal Xaa-Pro-Lys N-methyltransferase 1, N-terminally processed). S-adenosyl-L-methionine contacts are provided by residues glycine 69, arginine 74, 91–93 (DVT), 119–120 (LQ), and glutamine 135.

This sequence belongs to the methyltransferase superfamily. NTM1 family.

Its subcellular location is the nucleus. The catalysed reaction is N-terminal L-alanyl-L-prolyl-L-lysyl-[protein] + 3 S-adenosyl-L-methionine = N-terminal N,N,N-trimethyl-L-alanyl-L-prolyl-L-lysyl-[protein] + 3 S-adenosyl-L-homocysteine + 3 H(+). It catalyses the reaction N-terminal L-seryl-L-prolyl-L-lysyl-[protein] + 3 S-adenosyl-L-methionine = N-terminal N,N,N-trimethyl-L-seryl-L-prolyl-L-lysyl-[protein] + 3 S-adenosyl-L-homocysteine + 3 H(+). The enzyme catalyses N-terminal L-prolyl-L-prolyl-L-lysyl-[protein] + 2 S-adenosyl-L-methionine = N-terminal N,N-dimethyl-L-prolyl-L-prolyl-L-lysyl-[protein] + 2 S-adenosyl-L-homocysteine + 2 H(+). Its function is as follows. Distributive alpha-N-methyltransferase that methylates the N-terminus of target proteins containing the N-terminal motif [Ala/Gly/Pro/Ser]-Pro-Lys when the initiator Met is cleaved. Specifically catalyzes mono-, di- or tri-methylation of the exposed alpha-amino group of the Ala, Gly or Ser residue in the [Ala/Gly/Ser]-Pro-Lys motif and mono- or di-methylation of Pro in the Pro-Pro-Lys motif. Some of the substrates may be primed by NTMT2-mediated monomethylation. Catalyzes the trimethylation of the N-terminal Gly in CENPA (after removal of Met-1). Responsible for the N-terminal methylation of KLHL31, MYL2, MYL3, RB1, RCC1, RPL23A and SET. Required during mitosis for normal bipolar spindle formation and chromosome segregation via its action on RCC1. This is N-terminal Xaa-Pro-Lys N-methyltransferase 1 (Ntmt1) from Rattus norvegicus (Rat).